Reading from the N-terminus, the 173-residue chain is Photosystem I assembly protein Ycf3 (173 aa).

TPR repeat units lie at residues 35-68 (AFSY…EEDP), 72-105 (SYIL…NFKL), and 120-153 (GVQA…APDN).

Belongs to the Ycf3 family.

Its subcellular location is the plastid. It is found in the chloroplast thylakoid membrane. In terms of biological role, essential for the assembly of the photosystem I (PSI) complex. May act as a chaperone-like factor to guide the assembly of the PSI subunits. The chain is Photosystem I assembly protein Ycf3 from Porphyra purpurea (Red seaweed).